A 197-amino-acid chain; its full sequence is Interleukin-17C (197 aa).

The N-terminal stretch at Met1–Ala18 is a signal peptide. Cystine bridges form between Cys129–Cys189 and Cys134–Cys191.

The protein belongs to the IL-17 family. Binds to a heterodimer formed by IL17RA and IL17RE.

Its subcellular location is the secreted. Functionally, cytokine that plays a crucial role in innate immunity of the epithelium, including to intestinal bacterial pathogens, in an autocrine manner. Stimulates the production of antibacterial peptides and pro-inflammatory molecules for host defense by signaling through the NF-kappa-B and MAPK pathways. Acts synergically with IL22 in inducing the expression of antibacterial peptides, including S100A8, S100A9, REG3A and REG3G. Synergy is also observed with TNF and IL1B in inducing DEFB2 from keratinocytes. Depending on the type of insult, may have both protective and pathogenic properties, either by maintaining epithelial homeostasis after an inflammatory challenge or by promoting inflammatory phenotype. Enhanced IL17C/IL17RE signaling may also lead to greater susceptibility to autoimmune diseases. The chain is Interleukin-17C (IL17C) from Homo sapiens (Human).